Consider the following 277-residue polypeptide: Coiled-coil domain-containing protein 117 (277 aa).

The segment at 22–69 (SPPAFAGRAFPPGAAGHDLAPRPGVRGPPSSPDGRTARGRVSIHCRKK) is disordered. A compositionally biased stretch (low complexity) spans 23 to 55 (PPAFAGRAFPPGAAGHDLAPRPGVRGPPSSPDG). At Arg-47 the chain carries Omega-N-methylarginine. Position 52 is a phosphoserine (Ser-52). Positions 58–69 (ARGRVSIHCRKK) are enriched in basic residues. Residues 139–166 (QCEVARRRLQEIEDRIIDEDEEVESDRN) are a coiled coil. Disordered stretches follow at residues 216–242 (LSEK…ATGT) and 255–277 (QCTD…EMEL). Over residues 225–242 (NPKNYMGESQTKHTATGT) the composition is skewed to polar residues.

Interacts with CIAO2B; the interaction is direct. Interacts with MMS19; the interaction is indirect.

The protein resides in the cytoplasm. Its subcellular location is the cytoskeleton. The protein localises to the spindle. It localises to the nucleus. Its function is as follows. Facilitates DNA repair, cell cycle progression, and cell proliferation through its interaction with CIAO2B. This is Coiled-coil domain-containing protein 117 from Rattus norvegicus (Rat).